The primary structure comprises 453 residues: Cholecystokinin receptor (453 aa).

At 1-64 (MESLRSLSNI…ILDRKKPSPS (64 aa)) the chain is on the extracellular side. Asn-9, Asn-22, Asn-30, Asn-35, and Asn-39 each carry an N-linked (GlcNAc...) asparagine glycan. Residues 65–94 (DLNLWVRIVMYSVIFLLSVFGNTLIIIVLV) form a helical membrane-spanning segment. Topologically, residues 95–104 (MNKRLRTITN) are cytoplasmic. Residues 105-131 (SFLLSLALSDLMVAVLCMPFTLIPNLM) traverse the membrane as a helical segment. Residues 132-142 (ENFIFGEVICR) are Extracellular-facing. A disulfide bridge connects residues Cys-141 and Cys-223. Residues 143–164 (AAAYFMGLSVSVSTFNLVAISI) form a helical membrane-spanning segment. The Cytoplasmic portion of the chain corresponds to 165-184 (ERYSAICNPLKSRVWQTRSH). The chain crosses the membrane as a helical span at residues 185–205 (AYRVIAATWVLSSIIMIPYLV). Residues 206-237 (YNKTVTFPMKDRRVGHQCRLVWPSKQVQQAWY) lie on the Extracellular side of the membrane. Residues 238–261 (VLLLTILFFIPGVVMIVAYGLISR) traverse the membrane as a helical segment. Residues 262 to 343 (ELYRGIQFEM…KLMAKKRVIR (82 aa)) are Cytoplasmic-facing. The chain crosses the membrane as a helical span at residues 344 to 364 (MLIVIVAMFFICWMPIFVANT). Residues 365-379 (WKAFDELSAFNTLTG) lie on the Extracellular side of the membrane. The chain crosses the membrane as a helical span at residues 380–403 (APISFIHLLSYTSACVNPLIYCFM). A lipid anchor (S-palmitoyl cysteine) is attached at Cys-401. Residues 404-453 (NKRFRKAFLGTFSSCIKPCRNFRDTDEDIAATGASLSKFSYTTVSSLGPA) are Cytoplasmic-facing.

The protein belongs to the G-protein coupled receptor 1 family. As to expression, brain and stomach.

It localises to the cell membrane. Receptor for cholecystokinin. This receptor mediates its action by association with G proteins that activate a phosphatidylinositol-calcium second messenger system. Has high affinity for CCK-8 and low affinities for gastrin-17-I, CCK-4, and unsulfated CCK-8. This is Cholecystokinin receptor (cckar) from Xenopus laevis (African clawed frog).